A 315-amino-acid chain; its full sequence is Jacalin-related lectin 10 (315 aa).

Residues 1-23 (MVIIYIFLFLSSAIIDSTGLAKA) form the signal peptide. Jacalin-type lectin domains follow at residues 24–165 (QKLD…YLTT) and 168–312 (PTKS…YFSP).

It belongs to the jacalin lectin family.

The protein is Jacalin-related lectin 10 (JAL10) of Arabidopsis thaliana (Mouse-ear cress).